The following is a 635-amino-acid chain: 1-deoxy-D-xylulose-5-phosphate synthase (635 aa).

Thiamine diphosphate contacts are provided by residues H77 and G118–A120. Position 149 (D149) interacts with Mg(2+). Thiamine diphosphate-binding positions include G150 to S151, N178, F290, and E375. N178 contributes to the Mg(2+) binding site.

Belongs to the transketolase family. DXPS subfamily. As to quaternary structure, homodimer. Mg(2+) is required as a cofactor. The cofactor is thiamine diphosphate.

The catalysed reaction is D-glyceraldehyde 3-phosphate + pyruvate + H(+) = 1-deoxy-D-xylulose 5-phosphate + CO2. The protein operates within metabolic intermediate biosynthesis; 1-deoxy-D-xylulose 5-phosphate biosynthesis; 1-deoxy-D-xylulose 5-phosphate from D-glyceraldehyde 3-phosphate and pyruvate: step 1/1. Its function is as follows. Catalyzes the acyloin condensation reaction between C atoms 2 and 3 of pyruvate and glyceraldehyde 3-phosphate to yield 1-deoxy-D-xylulose-5-phosphate (DXP). The sequence is that of 1-deoxy-D-xylulose-5-phosphate synthase from Chlorobium phaeovibrioides (strain DSM 265 / 1930) (Prosthecochloris vibrioformis (strain DSM 265)).